Reading from the N-terminus, the 92-residue chain is RNA-binding protein Hfq (92 aa).

The 60-residue stretch at 9 to 68 (DPFLNALRRERVPVSVYLVNGIKLQGTIESFDQFVVLLRNTVSQMVYKHAISTVVPARNV) folds into the Sm domain.

The protein belongs to the Hfq family. Homohexamer.

Functionally, RNA chaperone that binds small regulatory RNA (sRNAs) and mRNAs to facilitate mRNA translational regulation in response to envelope stress, environmental stress and changes in metabolite concentrations. Also binds with high specificity to tRNAs. The protein is RNA-binding protein Hfq of Xylella fastidiosa (strain M12).